The primary structure comprises 382 residues: Proton extrusion protein PxcA (382 aa).

4 helical membrane passes run 162 to 182 (ILLL…TYIV), 257 to 277 (AIKN…VCLV), 305 to 325 (IILF…TVLL), and 340 to 360 (FILL…KYWI).

It belongs to the CemA family.

The protein resides in the cell inner membrane. In terms of biological role, required for H(+) efflux immediately after light irradiation to form a rapid H(+) concentration gradient across the thylakoid membranes. Together with PxcL, contributes to transient H(+) uptake following dark to light transition. This chain is Proton extrusion protein PxcA, found in Parasynechococcus marenigrum (strain WH8102).